The sequence spans 212 residues: GTP-binding protein EngB (212 aa).

The EngB-type G domain occupies 36-212; sequence TAPEVAFAGR…LRAAVYDAII (177 aa). GTP-binding positions include 44–51, 71–75, 91–94, 158–161, and 192–194; these read GRSNVGKS, GRTQE, DMPG, TKSD, and TSS. Mg(2+) is bound by residues S51 and T73.

The protein belongs to the TRAFAC class TrmE-Era-EngA-EngB-Septin-like GTPase superfamily. EngB GTPase family. It depends on Mg(2+) as a cofactor.

Its function is as follows. Necessary for normal cell division and for the maintenance of normal septation. This is GTP-binding protein EngB from Zymomonas mobilis subsp. mobilis (strain ATCC 31821 / ZM4 / CP4).